A 310-amino-acid polypeptide reads, in one-letter code: MSFGSFDHICNKTALPLCSVVGAVNQSAFFQRGIVPDCYARSVELANTMIFQIGNAFVHFGGLIILLIIIFNVRAKYTAIGRKEMLFFLYLAIGLIVSSLIVDCGVSPPSSTSYAYFVAVQIGLSSALCICLLYNGFLCFQFWEDGTSRSMWILRVGCFAWFAVNFIVCIITFKHWDTALDYRKTTTLFIFAYVLNAVILAVYVVSQIILVVFALESYWSLGAILLGVFFFVAGQVLTYVFSDKICRGASHYVDGLFFGSACNVFTFMMIYKFWDMITSDDLEFSVANVEQPINEFGVGADDEKRSSMFF.

7 consecutive transmembrane segments (helical) span residues 50-70, 86-106, 114-134, 151-171, 194-214, 221-241, and 257-277; these read IFQIGNAFVHFGGLIILLIII, LFFLYLAIGLIVSSLIVDCGV, YAYFVAVQIGLSSALCICLLY, MWILRVGCFAWFAVNFIVCII, VLNAVILAVYVVSQIILVVFA, LGAILLGVFFFVAGQVLTYVF, and FFGSACNVFTFMMIYKFWDMI.

It belongs to the CHS7 family. As to quaternary structure, interacts with CHS3.

Its subcellular location is the endoplasmic reticulum membrane. Chaperone required for the export of the chitin synthase CHS3 from the endoplasmic reticulum. This chain is Chitin synthase export chaperone (CHS7), found in Candida albicans (strain SC5314 / ATCC MYA-2876) (Yeast).